The following is a 199-amino-acid chain: MPIGVPSVPYRLPGSSFERWIDIYNRLAMERIIFLGQEVTDGLANSIVAQLLYLDSEDSSKPIYLYINSPGGSVTAGMAIYDTMQYIKSPVITICLGLAASMGAFLLCAGSKGKRLALPHSRIMIHQPLGGTGRRQASDIEIEAKEILRIKKLLNQIMADRTGQPLEKIEKDTDRDYFMSAEEAREYGLIDQVIAERPV.

Serine 101 serves as the catalytic Nucleophile. The active site involves histidine 126.

This sequence belongs to the peptidase S14 family. As to quaternary structure, fourteen ClpP subunits assemble into 2 heptameric rings which stack back to back to give a disk-like structure with a central cavity, resembling the structure of eukaryotic proteasomes.

Its subcellular location is the cytoplasm. The catalysed reaction is Hydrolysis of proteins to small peptides in the presence of ATP and magnesium. alpha-casein is the usual test substrate. In the absence of ATP, only oligopeptides shorter than five residues are hydrolyzed (such as succinyl-Leu-Tyr-|-NHMec, and Leu-Tyr-Leu-|-Tyr-Trp, in which cleavage of the -Tyr-|-Leu- and -Tyr-|-Trp bonds also occurs).. Its function is as follows. Cleaves peptides in various proteins in a process that requires ATP hydrolysis. Has a chymotrypsin-like activity. Plays a major role in the degradation of misfolded proteins. The sequence is that of ATP-dependent Clp protease proteolytic subunit 3 from Synechococcus elongatus (strain ATCC 33912 / PCC 7942 / FACHB-805) (Anacystis nidulans R2).